The chain runs to 269 residues: uncharacterized protein (269 aa).

Transmembrane regions (helical) follow at residues 9–29 (YIIG…AHLF), 50–70 (FMLG…IVPL), 82–102 (FSII…VWAF), 107–127 (LYWT…MYGQ), 147–167 (LVFG…LHCT), 173–193 (VFSN…ILGF), 200–220 (LVSA…HLFA), and 224–244 (IFAF…FLLP).

The protein localises to the membrane. This is an uncharacterized protein from Schizosaccharomyces pombe (strain 972 / ATCC 24843) (Fission yeast).